A 671-amino-acid polypeptide reads, in one-letter code: DNA ligase (671 aa).

NAD(+) contacts are provided by residues 32–36 (DVEYD), 81–82 (SL), and Glu114. Lys116 functions as the N6-AMP-lysine intermediate in the catalytic mechanism. NAD(+) is bound by residues Arg137, Glu175, Lys292, and Lys316. Cys410, Cys413, Cys428, and Cys434 together coordinate Zn(2+). In terms of domain architecture, BRCT spans 592-671 (EKNNYFSGKN…AEFYQILGIR (80 aa)).

It belongs to the NAD-dependent DNA ligase family. LigA subfamily. Mg(2+) serves as cofactor. Mn(2+) is required as a cofactor.

It carries out the reaction NAD(+) + (deoxyribonucleotide)n-3'-hydroxyl + 5'-phospho-(deoxyribonucleotide)m = (deoxyribonucleotide)n+m + AMP + beta-nicotinamide D-nucleotide.. Functionally, DNA ligase that catalyzes the formation of phosphodiester linkages between 5'-phosphoryl and 3'-hydroxyl groups in double-stranded DNA using NAD as a coenzyme and as the energy source for the reaction. It is essential for DNA replication and repair of damaged DNA. The polypeptide is DNA ligase (Baumannia cicadellinicola subsp. Homalodisca coagulata).